Reading from the N-terminus, the 1755-residue chain is Transposon Ty1-JR1 Gag-Pol polyprotein (1755 aa).

Positions 1 to 16 are enriched in low complexity; it reads MESQQLSQHSHISHGS. 3 disordered regions span residues 1–93, 126–173, and 352–421; these read MESQ…MMTQ, PQSQ…RPPP, and GSRN…SKST. Composition is skewed to polar residues over residues 48–60 and 127–152; these read TKAN…TPAS and QSQF…GNTF. The segment covering 153-165 has biased composition (low complexity); it reads TDSSSADSDMTST. The segment at 299-401 is RNA-binding; it reads NNGIHINNKV…NSKSKTARAH (103 aa). A compositionally biased stretch (low complexity) spans 402–418; sequence NVSTSNNSPSTDNDSIS. Ser-416 is subject to Phosphoserine. Asp-461 serves as the catalytic For protease activity; shared with dimeric partner. The segment at 583–640 is integrase-type zinc finger-like; it reads NVHTSESTRKYPYPFIHRMLAHANAQTIRYSLKNNTITYFNESDVDWSSAIDYQCPDC. Residues 660–835 enclose the Integrase catalytic domain; it reads NSYEPFQYLH…AGLDISTLLP (176 aa). Asp-671 and Asp-736 together coordinate Mg(2+). Disordered regions lie at residues 956 to 1087, 1092 to 1111, and 1130 to 1186; these read SKAV…ETEK, RSPS…NIVP, and DLPL…EDNE. Residues 960–969 show a composition bias toward low complexity; the sequence is SPTDSTPPST. The segment covering 1005–1015 has biased composition (polar residues); that stretch reads STPQISNIEST. Over residues 1038–1053 the composition is skewed to basic and acidic residues; it reads ESSHASKSKDFRHSDS. 2 stretches are compositionally biased toward polar residues: residues 1054–1082 and 1101–1111; these read YSEN…QISD and PENNSSHNIVP. The Bipartite nuclear localization signal motif lies at 1178-1212; sequence KKRSLEDNETEIKVSRDTWNTKNMRSLEPPRSKKR. The Reverse transcriptase Ty1/copia-type domain occupies 1338–1476; it reads NNYYITQLDI…DILGLEIKYQ (139 aa). The Mg(2+) site is built by Asp-1346, Asp-1427, Asp-1428, Asp-1610, Glu-1652, and Asp-1685. One can recognise an RNase H Ty1/copia-type domain in the interval 1610–1752; sequence DASYGNQPYY…IKTFKLLTNK (143 aa).

The capsid protein forms a homotrimer, from which the VLPs are assembled. The protease is a homodimer, whose active site consists of two apposed aspartic acid residues. In terms of processing, initially, virus-like particles (VLPs) are composed of the structural unprocessed proteins Gag and Gag-Pol, and also contain the host initiator methionine tRNA (tRNA(i)-Met) which serves as a primer for minus-strand DNA synthesis, and a dimer of genomic Ty RNA. Processing of the polyproteins occurs within the particle and proceeds by an ordered pathway, called maturation. First, the protease (PR) is released by autocatalytic cleavage of the Gag-Pol polyprotein yielding capsid protein p45 and a Pol-p154 precursor protein. This cleavage is a prerequisite for subsequent processing of Pol-p154 at the remaining sites to release the mature structural and catalytic proteins. Maturation takes place prior to the RT reaction and is required to produce transposition-competent VLPs.

It localises to the cytoplasm. The protein localises to the nucleus. The enzyme catalyses DNA(n) + a 2'-deoxyribonucleoside 5'-triphosphate = DNA(n+1) + diphosphate. It carries out the reaction Endonucleolytic cleavage to 5'-phosphomonoester.. In terms of biological role, capsid protein (CA) is the structural component of the virus-like particle (VLP), forming the shell that encapsulates the retrotransposons dimeric RNA genome. The particles are assembled from trimer-clustered units and there are holes in the capsid shells that allow for the diffusion of macromolecules. CA also has nucleocapsid-like chaperone activity, promoting primer tRNA(i)-Met annealing to the multipartite primer-binding site (PBS), dimerization of Ty1 RNA and initiation of reverse transcription. The aspartyl protease (PR) mediates the proteolytic cleavages of the Gag and Gag-Pol polyproteins after assembly of the VLP. Functionally, reverse transcriptase/ribonuclease H (RT) is a multifunctional enzyme that catalyzes the conversion of the retro-elements RNA genome into dsDNA within the VLP. The enzyme displays a DNA polymerase activity that can copy either DNA or RNA templates, and a ribonuclease H (RNase H) activity that cleaves the RNA strand of RNA-DNA heteroduplexes during plus-strand synthesis and hydrolyzes RNA primers. The conversion leads to a linear dsDNA copy of the retrotransposon that includes long terminal repeats (LTRs) at both ends. Its function is as follows. Integrase (IN) targets the VLP to the nucleus, where a subparticle preintegration complex (PIC) containing at least integrase and the newly synthesized dsDNA copy of the retrotransposon must transit the nuclear membrane. Once in the nucleus, integrase performs the integration of the dsDNA into the host genome. In Saccharomyces cerevisiae (strain ATCC 204508 / S288c) (Baker's yeast), this protein is Transposon Ty1-JR1 Gag-Pol polyprotein (TY1B-JR1).